A 178-amino-acid chain; its full sequence is Photosystem I assembly protein Ycf4 (178 aa).

Helical transmembrane passes span Ile19–Ser39 and Leu61–Ile81.

It belongs to the Ycf4 family.

It is found in the cellular thylakoid membrane. Seems to be required for the assembly of the photosystem I complex. The protein is Photosystem I assembly protein Ycf4 of Synechococcus sp. (strain CC9311).